Consider the following 1165-residue polypeptide: MNAPRYAEIGVTTNFSFLEGGSHPQDYVHQASRLGLDAIGIADRNTLAGVVRAYSELDNEELAYKPKLLIGARLCFVDGTPDVLAYPTDRAAYGRLCRLLSAGKLRAGKGECHLTFADLEAFVSSNAARPFPSSWPGLTRPSTSLQPRVLQDVDARDKPGHDGGKREIGRSQILFVLMPPYRFQAKAITAALERLTALNSGNVWLALAPYYRGDDKRRLARLRRIAAAADVPGIATNDVLYHHPSRRALQDVLTCVRDKTTIDKAGRRLEGNAERHLKPAAEMARLFRADLDAVAETLRFADRISFTLDELKYHYPDEPVPPGKTAQQHLEDLTREGIATYFPNGISDRLRATIAKELTLIAKRDYAHYFLTVHDIVRYARSQNILCQGRGSAANSAVCYVLGITCVDPTEIDLLFERFVSEERDEPPDIDVDFEHSRREEVMQYIYRRYGRHRAAIVSTVIHYRPRSAIRDVGKALGLSEDVTAALADTVWGSWGKGLSEMQVRQAGLDPTNPMIGRAVELATELIGFPRHLSQHVGGYVLTQDRLDSYVPIGNAAMADRTFIEWDKDDIDAVKMMKVDVLALGMLTCIRKGFDLIAQHKGVRFQLSDIKSEDDNNVYQMLQRGESIGVFQVESRAQMNMLPRLKPRCFYDLVIEVAIVRPGPIQGDMVHPYLRRRNGQEPVVYPSPSGEAGDKNELQQILGKTLGVPLFQEQAMRIAIEAAHFTPDEANQLRRAMATFRNVGTIGKFESKMIGNLMARGYDATFAKNCFEQIKGFGSYGFPESHAASFAKLVYVSAWMKCEHPDAFCCALLNSQPMGFYAPAQIVGDARANKVEVRPVDVSFSDGQCTLEERCGAYHAVRLGFRQIDGFRWADPDEERVRLEAGLPPSDDWAARIVAARARGPFGSLEQFARITALPKRALILLADADAFRSLGLDRRAALWAVRRLPDDVPLPLFEAASAREQQDEQAAPLPQMPMAEHVVADYQTVRLSLKGHPLEFLRAVFATERVVTCREVSETRRNGRRVRCAGVVLVRQRPGSASGVIFMTIEDETGIANIVVWPSVMEKFRKEVMGARLILVEGKIQASPEGVVHLVAERLVDRSSEMGRLSEGLARPPLPTGADLYEPLTYEPLNGDRRDNPDAPAQRLRHPRDVRILPPSRDFH.

A disordered region spans residues 1111-1165 (SEGLARPPLPTGADLYEPLTYEPLNGDRRDNPDAPAQRLRHPRDVRILPPSRDFH). Residues 1152 to 1165 (PRDVRILPPSRDFH) are compositionally biased toward basic and acidic residues.

The protein belongs to the DNA polymerase type-C family. DnaE2 subfamily.

It localises to the cytoplasm. The enzyme catalyses DNA(n) + a 2'-deoxyribonucleoside 5'-triphosphate = DNA(n+1) + diphosphate. Its function is as follows. DNA polymerase involved in damage-induced mutagenesis and translesion synthesis (TLS). It is not the major replicative DNA polymerase. This chain is Error-prone DNA polymerase, found in Rhodopseudomonas palustris (strain HaA2).